The sequence spans 205 residues: GTP cyclohydrolase-2 (205 aa).

A GTP-binding site is contributed by 49 to 53 (RLHSE). Residues cysteine 54, cysteine 65, and cysteine 67 each coordinate Zn(2+). Residues glutamine 70, 92–94 (EGR), and threonine 114 contribute to the GTP site. Aspartate 126 (proton acceptor) is an active-site residue. Catalysis depends on arginine 128, which acts as the Nucleophile. The GTP site is built by threonine 149 and lysine 154.

The protein belongs to the GTP cyclohydrolase II family. The cofactor is Zn(2+).

It catalyses the reaction GTP + 4 H2O = 2,5-diamino-6-hydroxy-4-(5-phosphoribosylamino)-pyrimidine + formate + 2 phosphate + 3 H(+). It participates in cofactor biosynthesis; riboflavin biosynthesis; 5-amino-6-(D-ribitylamino)uracil from GTP: step 1/4. Its function is as follows. Catalyzes the conversion of GTP to 2,5-diamino-6-ribosylamino-4(3H)-pyrimidinone 5'-phosphate (DARP), formate and pyrophosphate. This Pseudomonas putida (strain ATCC 700007 / DSM 6899 / JCM 31910 / BCRC 17059 / LMG 24140 / F1) protein is GTP cyclohydrolase-2.